The chain runs to 247 residues: Reticulon-like protein B8 (247 aa).

The region spanning 61–247 is the Reticulon domain; that stretch reads SADVLLWRNK…SGKFGLKKRE (187 aa). 3 helical membrane passes run 71–91, 92–112, and 166–186; these read KISA…EWIN, FHFL…QFVW, and FLMA…CNFL.

The protein resides in the endoplasmic reticulum membrane. The protein is Reticulon-like protein B8 (RTNLB8) of Arabidopsis thaliana (Mouse-ear cress).